The following is a 352-amino-acid chain: MNPLTQVKNLQKINARESDLGISDEASWHAKYKNSAYVYVGGIPFDLTEGDLLAVFSQYGEIVDVNLIRDKGTGKSKGFAFLAYEDQRSTILAVDNLNGALVLGRTIKVDHCGAYKKHEEEDEETRRQNREARGVCRAFQRGECTRGDSCKFSHDEKRAANTGWGHEEDRSSKWDHDKNREGRGVCRAFQRGECTRGDSCKFSHDEKRAATTGWGHEEDRSSKWDQDKLNGAKKGGTSFGNRGDFKPDVEEKSYRGRGDGDASYGRPKERERVDREDMGPRSRDAYDMKEQKRSGRYDNAYSRRHNDEIDYVREDKGSRAQDWEKRKAESRRDRNDREEKDRDSLRREDRRR.

The region spanning 36–114 is the RRM domain; sequence AYVYVGGIPF…RTIKVDHCGA (79 aa). C3H1-type zinc fingers lie at residues 130–157 and 180–207; these read REAR…HDEK and REGR…HDEK. Residues 156–179 are disordered; the sequence is EKRAANTGWGHEEDRSSKWDHDKN. 3 stretches are compositionally biased toward basic and acidic residues: residues 210 to 230, 243 to 296, and 304 to 352; these read ATTG…DKLN, GDFK…RSGR, and RHND…DRRR. Residues 210-352 are disordered; sequence ATTGWGHEED…DSLRREDRRR (143 aa). Residues 319–348 are a coiled coil; it reads RAQDWEKRKAESRRDRNDREEKDRDSLRRE.

The sequence is that of Zinc finger CCCH domain-containing protein 42 from Arabidopsis thaliana (Mouse-ear cress).